The following is a 293-amino-acid chain: Nucleotide-binding protein cauri_1197 (293 aa).

An ATP-binding site is contributed by glycine 16–threonine 23. Aspartate 67–serine 70 contributes to the GTP binding site.

Belongs to the RapZ-like family.

Functionally, displays ATPase and GTPase activities. This Corynebacterium aurimucosum (strain ATCC 700975 / DSM 44827 / CIP 107346 / CN-1) (Corynebacterium nigricans) protein is Nucleotide-binding protein cauri_1197.